Consider the following 439-residue polypeptide: MLLSLLFLLSTFAFGALTQPVPAKSENNVQFLHSKNKKRFYDYSTELIRGVNIGGWLLLEPYITPSLFEAFRTDENSDAGIPVDEYHYCEALGSEVAESRLEAHWSTFYTEQDFKNIASAGLNMVRIPIGYWAFKTLDSDPYVTGKQESYLDKAIQWSKDAGLKVWVDLHGAPGSQNGFDNSGLRDHWSFLEDENLNLTKEVIKYLLEKYSREEYLDTVIGIELINEPLGPVLDMDKLKEYYQFGYDYLRNELGSDQIVVIHDAFEAYNYWDSTLTVEDGSWGVVVDHHHYQCFSSDQLARSIDEHVSVACEWGTGVLTESHWTVAGEWSAALTDCAKWINGVGYGARYDGSFTKDSESSYYIGSCENNEDVSTWSEERKSNNRKYVEAQLDAFELRGGWIFWCYKTETTVEWDLQRLMYSGLFPQPVTDRQYPNQCGF.

Residues 1–18 (MLLSLLFLLSTFAFGALT) form the signal peptide. The active-site Proton donor is the Glu-227. Cystine bridges form between Cys-311–Cys-437 and Cys-336–Cys-366. Residue Glu-328 is the Nucleophile of the active site.

This sequence belongs to the glycosyl hydrolase 5 (cellulase A) family.

Its subcellular location is the secreted. The catalysed reaction is Successive hydrolysis of beta-D-glucose units from the non-reducing ends of (1-&gt;3)-beta-D-glucans, releasing alpha-glucose.. Functionally, beta-glucanases participate in the metabolism of beta-glucan, the main structural component of the cell wall. It could also function biosynthetically as a transglycosylase. In Lachancea kluyveri (strain ATCC 58438 / CBS 3082 / BCRC 21498 / NBRC 1685 / JCM 7257 / NCYC 543 / NRRL Y-12651) (Yeast), this protein is Glucan 1,3-beta-glucosidase (EXG1).